Consider the following 192-residue polypeptide: 3-hydroxyanthranilate 3,4-dioxygenase (192 aa).

Position 50 (Arg-50) interacts with O2. 3 residues coordinate Fe cation: His-54, Glu-60, and His-102. Glu-60 lines the substrate pocket. The substrate site is built by Arg-106 and Glu-116. 4 residues coordinate a divalent metal cation: Cys-131, Cys-134, Cys-168, and Cys-171.

It belongs to the 3-HAO family. Fe(2+) serves as cofactor.

The protein localises to the cytoplasm. The catalysed reaction is 3-hydroxyanthranilate + O2 = (2Z,4Z)-2-amino-3-carboxymuconate 6-semialdehyde. It functions in the pathway cofactor biosynthesis; NAD(+) biosynthesis; quinolinate from L-kynurenine: step 3/3. Catalyzes the oxidative ring opening of 3-hydroxyanthranilate to 2-amino-3-carboxymuconate semialdehyde, which spontaneously cyclizes to quinolinate. The sequence is that of 3-hydroxyanthranilate 3,4-dioxygenase (bna1) from Neosartorya fischeri (strain ATCC 1020 / DSM 3700 / CBS 544.65 / FGSC A1164 / JCM 1740 / NRRL 181 / WB 181) (Aspergillus fischerianus).